A 142-amino-acid polypeptide reads, in one-letter code: Large ribosomal subunit protein uL16 (142 aa).

This sequence belongs to the universal ribosomal protein uL16 family. As to quaternary structure, part of the 50S ribosomal subunit.

Binds 23S rRNA and is also seen to make contacts with the A and possibly P site tRNAs. In Gemmatimonas aurantiaca (strain DSM 14586 / JCM 11422 / NBRC 100505 / T-27), this protein is Large ribosomal subunit protein uL16.